The chain runs to 447 residues: D-ribitol-5-phosphate cytidylyltransferase (447 aa).

Belongs to the IspD/TarI cytidylyltransferase family. IspD subfamily. As to quaternary structure, homodimer.

The protein localises to the cytoplasm. The protein resides in the cytosol. It catalyses the reaction D-ribitol 5-phosphate + CTP + H(+) = CDP-L-ribitol + diphosphate. The catalysed reaction is D-ribose 5-phosphate + CTP + H(+) = CDP-D-ribose + diphosphate. It carries out the reaction D-ribulose 5-phosphate + CTP + H(+) = CDP-D-ribulose + diphosphate. It functions in the pathway protein modification; protein glycosylation. In terms of biological role, cytidylyltransferase required for protein O-linked mannosylation. Catalyzes the formation of CDP-ribitol nucleotide sugar from D-ribitol 5-phosphate. CDP-ribitol is a substrate of FKTN during the biosynthesis of the phosphorylated O-mannosyl trisaccharide (N-acetylgalactosamine-beta-3-N-acetylglucosamine-beta-4-(phosphate-6-)mannose), a carbohydrate structure present in alpha-dystroglycan (DAG1), which is required for binding laminin G-like domain-containing extracellular proteins with high affinity. Shows activity toward other pentose phosphate sugars and mediates formation of CDP-ribulose or CDP-ribose using CTP and ribulose-5-phosphate or ribose-5-phosphate, respectively. Not involved in dolichol production. The sequence is that of D-ribitol-5-phosphate cytidylyltransferase (Crppa) from Rattus norvegicus (Rat).